Consider the following 433-residue polypeptide: Pyrimidine-nucleoside phosphorylase (433 aa).

Lysine 81–serine 83 contacts phosphate. K(+)-binding residues include glycine 88 and threonine 90. Phosphate is bound by residues threonine 92, lysine 108–serine 110, and threonine 120. Substrate is bound by residues arginine 168 and lysine 187. Residues leucine 243, alanine 246, and glutamate 255 each contribute to the K(+) site.

This sequence belongs to the thymidine/pyrimidine-nucleoside phosphorylase family. As to quaternary structure, homodimer. Requires K(+) as cofactor.

It catalyses the reaction uridine + phosphate = alpha-D-ribose 1-phosphate + uracil. The catalysed reaction is thymidine + phosphate = 2-deoxy-alpha-D-ribose 1-phosphate + thymine. It carries out the reaction 2'-deoxyuridine + phosphate = 2-deoxy-alpha-D-ribose 1-phosphate + uracil. In terms of biological role, catalyzes phosphorolysis of the pyrimidine nucleosides uridine, thymidine and 2'-deoxyuridine with the formation of the corresponding pyrimidine base and ribose-1-phosphate. This chain is Pyrimidine-nucleoside phosphorylase (pdp), found in Staphylococcus aureus (strain bovine RF122 / ET3-1).